The following is a 207-amino-acid chain: Superoxide dismutase [Fe] (207 aa).

Residues histidine 28, histidine 76, aspartate 160, and histidine 164 each coordinate Fe cation.

This sequence belongs to the iron/manganese superoxide dismutase family. As to quaternary structure, homotetramer. It depends on Fe cation as a cofactor.

It is found in the secreted. It catalyses the reaction 2 superoxide + 2 H(+) = H2O2 + O2. Its function is as follows. Destroys superoxide anion radicals which are normally produced within the cells and which are toxic to biological systems. The protein is Superoxide dismutase [Fe] (sodB) of Mycobacterium tuberculosis (strain CDC 1551 / Oshkosh).